A 356-amino-acid polypeptide reads, in one-letter code: 4-hydroxy-3-methylbut-2-en-1-yl diphosphate synthase (flavodoxin) (356 aa).

The [4Fe-4S] cluster site is built by C264, C267, C299, and E306.

It belongs to the IspG family. Requires [4Fe-4S] cluster as cofactor.

The enzyme catalyses (2E)-4-hydroxy-3-methylbut-2-enyl diphosphate + oxidized [flavodoxin] + H2O + 2 H(+) = 2-C-methyl-D-erythritol 2,4-cyclic diphosphate + reduced [flavodoxin]. Its pathway is isoprenoid biosynthesis; isopentenyl diphosphate biosynthesis via DXP pathway; isopentenyl diphosphate from 1-deoxy-D-xylulose 5-phosphate: step 5/6. In terms of biological role, converts 2C-methyl-D-erythritol 2,4-cyclodiphosphate (ME-2,4cPP) into 1-hydroxy-2-methyl-2-(E)-butenyl 4-diphosphate. This Campylobacter lari (strain RM2100 / D67 / ATCC BAA-1060) protein is 4-hydroxy-3-methylbut-2-en-1-yl diphosphate synthase (flavodoxin).